Here is a 306-residue protein sequence, read N- to C-terminus: Pyridoxal 5'-phosphate synthase subunit PdxS (306 aa).

Aspartate 36 provides a ligand contact to D-ribose 5-phosphate. Lysine 93 acts as the Schiff-base intermediate with D-ribose 5-phosphate in catalysis. Position 165 (glycine 165) interacts with D-ribose 5-phosphate. Residue arginine 177 participates in D-glyceraldehyde 3-phosphate binding. Residues glycine 226 and 247-248 (GS) contribute to the D-ribose 5-phosphate site.

Belongs to the PdxS/SNZ family. In the presence of PdxT, forms a dodecamer of heterodimers.

It catalyses the reaction aldehydo-D-ribose 5-phosphate + D-glyceraldehyde 3-phosphate + L-glutamine = pyridoxal 5'-phosphate + L-glutamate + phosphate + 3 H2O + H(+). The protein operates within cofactor biosynthesis; pyridoxal 5'-phosphate biosynthesis. Catalyzes the formation of pyridoxal 5'-phosphate from ribose 5-phosphate (RBP), glyceraldehyde 3-phosphate (G3P) and ammonia. The ammonia is provided by the PdxT subunit. Can also use ribulose 5-phosphate and dihydroxyacetone phosphate as substrates, resulting from enzyme-catalyzed isomerization of RBP and G3P, respectively. The protein is Pyridoxal 5'-phosphate synthase subunit PdxS of Salinispora tropica (strain ATCC BAA-916 / DSM 44818 / JCM 13857 / NBRC 105044 / CNB-440).